Consider the following 32-residue polypeptide: U3-theraphotoxin-Hhn1r (32 aa).

3 disulfide bridges follow: C2/C15, C9/C20, and C14/C27.

The protein belongs to the neurotoxin 10 (Hwtx-1) family. 16 (Hntx-8) subfamily. In terms of tissue distribution, expressed by the venom gland.

Its subcellular location is the secreted. In terms of biological role, ion channel inhibitor. In Cyriopagopus hainanus (Chinese bird spider), this protein is U3-theraphotoxin-Hhn1r.